The sequence spans 69 residues: DNA gyrase inhibitor YacG (69 aa).

Positions methionine 1 to arginine 15 are enriched in basic and acidic residues. The disordered stretch occupies residues methionine 1–glutamate 22. The Zn(2+) site is built by cysteine 20, cysteine 23, cysteine 35, and cysteine 39.

It belongs to the DNA gyrase inhibitor YacG family. Interacts with GyrB. Zn(2+) is required as a cofactor.

In terms of biological role, inhibits all the catalytic activities of DNA gyrase by preventing its interaction with DNA. Acts by binding directly to the C-terminal domain of GyrB, which probably disrupts DNA binding by the gyrase. The protein is DNA gyrase inhibitor YacG of Allorhizobium ampelinum (strain ATCC BAA-846 / DSM 112012 / S4) (Agrobacterium vitis (strain S4)).